A 324-amino-acid polypeptide reads, in one-letter code: D-alanine--D-alanine ligase (324 aa).

One can recognise an ATP-grasp domain in the interval N121–E321. M149–T204 provides a ligand contact to ATP. The Mg(2+) site is built by D275, E288, and N290.

It belongs to the D-alanine--D-alanine ligase family. It depends on Mg(2+) as a cofactor. Mn(2+) is required as a cofactor.

Its subcellular location is the cytoplasm. The catalysed reaction is 2 D-alanine + ATP = D-alanyl-D-alanine + ADP + phosphate + H(+). The protein operates within cell wall biogenesis; peptidoglycan biosynthesis. Cell wall formation. The sequence is that of D-alanine--D-alanine ligase from Bacteroides thetaiotaomicron (strain ATCC 29148 / DSM 2079 / JCM 5827 / CCUG 10774 / NCTC 10582 / VPI-5482 / E50).